The chain runs to 1033 residues: Tyrosine-protein kinase-like otk (1033 aa).

A signal peptide spans 1-22 (MTARMISIYGLVLASMMASVWA). Residues 23 to 581 (SSSRFQRLPQ…GGDGFLVTRA (559 aa)) are Extracellular-facing. Ig-like C2-type domains lie at 25–108 (SRFQ…REAS), 109–199 (PPAK…RVMS), 251–365 (PEDL…LPIS), 368–463 (PGVL…VAIN), and 468–558 (PKFS…VQLV). Asparagine 39 carries an N-linked (GlcNAc...) asparagine glycan. 4 cysteine pairs are disulfide-bonded: cysteine 46–cysteine 95, cysteine 137–cysteine 188, cysteine 276–cysteine 354, and cysteine 399–cysteine 447. N-linked (GlcNAc...) asparagine glycans are attached at residues asparagine 336, asparagine 417, asparagine 429, asparagine 444, asparagine 457, asparagine 512, and asparagine 524. Cysteine 490 and cysteine 542 form a disulfide bridge. Residues 582 to 602 (VLITMTVALAYIVLVVGLMLW) traverse the membrane as a helical segment. Residues 603–1033 (CRYRRQARKA…LSKAMQSVEK (431 aa)) are Cytoplasmic-facing. 2 disordered regions span residues 617-679 (LSTK…KKSA) and 718-760 (SPTD…KTSM). Over residues 655 to 673 (KSSGDAQKSDDTACSQQSR) the composition is skewed to polar residues. Residue serine 678 is modified to Phosphoserine. In terms of domain architecture, Protein kinase; inactive spans 692 to 1028 (LSELIQIGRG…QLGAALSKAM (337 aa)). The segment covering 720 to 731 (TDKDADTEKQHS) has biased composition (basic and acidic residues).

The protein belongs to the protein kinase superfamily. Tyr protein kinase family. Insulin receptor subfamily. In terms of assembly, interacts with plexA; component of a receptor complex that mediates the repulsive signaling in response to Semaphorin ligands.

It is found in the cell membrane. Functionally, acts as a calcium-dependent, homophilic cell adhesion molecule that regulates neural recognition during the development of the nervous system. Component of the repulsive Plexin signaling response to regulate motor axon guidance at the embryonic stage. Also component of a receptor complex that is required in the adult visual system to innervate the lamina layer; specific targeting of R1-R6 axons. The chain is Tyrosine-protein kinase-like otk from Drosophila erecta (Fruit fly).